Consider the following 459-residue polypeptide: tRNA modification GTPase MnmE (459 aa).

Residues R29, E91, and R130 each coordinate (6S)-5-formyl-5,6,7,8-tetrahydrofolate. The TrmE-type G domain maps to 225–381 (GVKVAIVGRP…LEEALEQLVT (157 aa)). K(+) is bound at residue N235. Residues 235-240 (NVGKSS), 254-260 (TDLPGTT), and 279-282 (DTAG) contribute to the GTP site. S239 lines the Mg(2+) pocket. K(+) contacts are provided by T254, L256, and T259. Residue T260 coordinates Mg(2+). Residue K459 participates in (6S)-5-formyl-5,6,7,8-tetrahydrofolate binding.

Belongs to the TRAFAC class TrmE-Era-EngA-EngB-Septin-like GTPase superfamily. TrmE GTPase family. Homodimer. Heterotetramer of two MnmE and two MnmG subunits. K(+) serves as cofactor.

The protein resides in the cytoplasm. Exhibits a very high intrinsic GTPase hydrolysis rate. Involved in the addition of a carboxymethylaminomethyl (cmnm) group at the wobble position (U34) of certain tRNAs, forming tRNA-cmnm(5)s(2)U34. This Synechococcus sp. (strain JA-2-3B'a(2-13)) (Cyanobacteria bacterium Yellowstone B-Prime) protein is tRNA modification GTPase MnmE.